The primary structure comprises 934 residues: LPS-assembly protein LptD (934 aa).

The N-terminal stretch at 1–33 (MALKSPAFRRKFPLLVTGGLLALQPFATSYVVA) is a signal peptide. A disordered region spans residues 52-86 (KSPVNNLPPRPVHDGAALTSGTEAPSAEAESADKP).

This sequence belongs to the LptD family. As to quaternary structure, component of the lipopolysaccharide transport and assembly complex. Interacts with LptE and LptA.

It localises to the cell outer membrane. Functionally, together with LptE, is involved in the assembly of lipopolysaccharide (LPS) at the surface of the outer membrane. The polypeptide is LPS-assembly protein LptD (Pseudomonas putida (strain W619)).